The chain runs to 197 residues: Pyridoxal 5'-phosphate synthase subunit PdxT (197 aa).

L-glutamine is bound at residue 54-56 (GES). Catalysis depends on cysteine 86, which acts as the Nucleophile. Residues arginine 113 and 141-142 (IR) each bind L-glutamine. Residues histidine 177 and glutamate 179 each act as charge relay system in the active site.

This sequence belongs to the glutaminase PdxT/SNO family. As to quaternary structure, in the presence of PdxS, forms a dodecamer of heterodimers. Only shows activity in the heterodimer.

The catalysed reaction is aldehydo-D-ribose 5-phosphate + D-glyceraldehyde 3-phosphate + L-glutamine = pyridoxal 5'-phosphate + L-glutamate + phosphate + 3 H2O + H(+). It carries out the reaction L-glutamine + H2O = L-glutamate + NH4(+). It functions in the pathway cofactor biosynthesis; pyridoxal 5'-phosphate biosynthesis. Functionally, catalyzes the hydrolysis of glutamine to glutamate and ammonia as part of the biosynthesis of pyridoxal 5'-phosphate. The resulting ammonia molecule is channeled to the active site of PdxS. The protein is Pyridoxal 5'-phosphate synthase subunit PdxT of Haloarcula marismortui (strain ATCC 43049 / DSM 3752 / JCM 8966 / VKM B-1809) (Halobacterium marismortui).